We begin with the raw amino-acid sequence, 590 residues long: ATP-dependent zinc metalloprotease FtsH 1 (590 aa).

Residues 1–8 (MLKLTKKQ) are Cytoplasmic-facing. Residues 9–29 (LIIVLGIAIVVVSAIGYAVYT) form a helical membrane-spanning segment. Residues 30–103 (QYFNEDKLEI…QVRETTDQYS (74 aa)) are Extracellular-facing. A helical transmembrane segment spans residues 104–124 (VVQVITFVVLIGGFIGVAIFL). At 125-590 (SKKNATQTSK…NEIFSGFQSM (466 aa)) the chain is on the cytoplasmic side. Residue 195–202 (GSPGTGKT) participates in ATP binding. His418 is a binding site for Zn(2+). The active site involves Glu419. 2 residues coordinate Zn(2+): His422 and Asp496.

The protein in the central section; belongs to the AAA ATPase family. In the C-terminal section; belongs to the peptidase M41 family. As to quaternary structure, homohexamer. The cofactor is Zn(2+).

It localises to the cell membrane. In terms of biological role, acts as a processive, ATP-dependent zinc metallopeptidase for both cytoplasmic and membrane proteins. Plays a role in the quality control of integral membrane proteins. The protein is ATP-dependent zinc metalloprotease FtsH 1 of Alkaliphilus metalliredigens (strain QYMF).